The following is a 245-amino-acid chain: 3-deoxy-manno-octulosonate cytidylyltransferase (245 aa).

Belongs to the KdsB family.

Its subcellular location is the cytoplasm. The enzyme catalyses 3-deoxy-alpha-D-manno-oct-2-ulosonate + CTP = CMP-3-deoxy-beta-D-manno-octulosonate + diphosphate. Its pathway is nucleotide-sugar biosynthesis; CMP-3-deoxy-D-manno-octulosonate biosynthesis; CMP-3-deoxy-D-manno-octulosonate from 3-deoxy-D-manno-octulosonate and CTP: step 1/1. The protein operates within bacterial outer membrane biogenesis; lipopolysaccharide biosynthesis. Functionally, activates KDO (a required 8-carbon sugar) for incorporation into bacterial lipopolysaccharide in Gram-negative bacteria. The protein is 3-deoxy-manno-octulosonate cytidylyltransferase of Rhodopseudomonas palustris (strain BisB18).